The sequence spans 1020 residues: X-linked retinitis pigmentosa GTPase regulator (1020 aa).

6 RCC1 repeats span residues 54-105 (NKLY…STEG), 106-158 (GNVY…LTED), 159-208 (GRLF…VTTD), 209-261 (GELY…LTEN), 262-313 (AVYT…ITDI), and 314-367 (GLMY…FAAP). Ser-418 and Ser-518 each carry phosphoserine. Disordered stretches follow at residues 609–776 (HENN…IISK), 790–906 (EIPE…KEKA), and 989–1020 (DNKD…CTIL). Basic and acidic residues-rich tracts occupy residues 618-636 (LDAK…QKES), 644-665 (EKET…EKST), 685-698 (EENK…ESCK), 704-715 (DSERESVEKPDS), 760-771 (KLIEQGNEKETK), 790-802 (EIPE…EDSK), 816-853 (ENVK…LKLE), and 883-906 (SKTE…KEKA). A compositionally biased stretch (polar residues) spans 996-1009 (NHMSQNHQNIPPTN). At Cys-1017 the chain carries Cysteine methyl ester. Residue Cys-1017 is the site of S-geranylgeranyl cysteine attachment. A propeptide spans 1018-1020 (TIL) (removed in mature form).

In terms of assembly, interacts with SPATA7. Interacts with CEP290. Interacts with WHRN. Interacts with PDE6D. Interacts with RPGRIP1. Interacts with RPGRIP1L. PDE6D, RPGRIP1 and RPGRIP1L may compete for the same binding sites. Interacts with RAB37 and RAB8A (in GDP-bound forms); functions as GEF for RAB37 and RAB8A. As to quaternary structure, isoform 6 interacts with NPM1 (via C-terminus). Isoform 6 interacts with SMC1A and SMC3. In terms of processing, prenylated. As to expression, heart, brain, placenta, lung, liver, muscle, kidney, retina, pancreas and fetal retinal pigment epithelium. Isoform 3 is found only in the retina. Colocalizes with RPGRIP1 in the outer segment of rod photoreceptors and cone outer segments.

It localises to the cytoplasm. Its subcellular location is the cytoskeleton. The protein localises to the flagellum axoneme. It is found in the golgi apparatus. The protein resides in the cell projection. It localises to the cilium. Its subcellular location is the microtubule organizing center. The protein localises to the centrosome. It is found in the cilium basal body. The protein resides in the cilium axoneme. Its function is as follows. Acts as a guanine-nucleotide releasing factor (GEF) for RAB8A and RAB37 by promoting the conversion of inactive RAB-GDP to the active form RAB-GTP. GEF activity towards RAB8A may facilitate ciliary trafficking by modulating ciliary intracellular localization of RAB8A. GEF activity towards RAB37 maintains autophagic homeostasis and retinal function. Involved in photoreceptor integrity. May control cilia formation by regulating actin stress filaments and cell contractility. May be involved in microtubule organization and regulation of transport in primary cilia. May play a critical role in spermatogenesis and in intraflagellar transport processes. This chain is X-linked retinitis pigmentosa GTPase regulator, found in Homo sapiens (Human).